The primary structure comprises 369 residues: ERCC4 domain-containing protein EP364R (369 aa).

The ERCC4 domain maps to 3-101 (FLVADHREHH…QLYFFVEGPA (99 aa)). Residues 339-369 (PLHDVSDDASSDASSPTGHQTLSKEMSLNTA) are disordered. Over residues 354-369 (PTGHQTLSKEMSLNTA) the composition is skewed to polar residues.

The protein belongs to the asfivirus EP364R family.

Its function is as follows. Plays a role in the inhibition of type I interferon signaling pathway. Mechanistically, specifically interacts with 2',3'-cGAMP and cleaves it via its phosphodiesterase activity. In turn, prevents 2',3'-cGAMP interaction with host ER-resident STING1 leading to inhibition of downstream signaling pathway and type I interferon production. This African swine fever virus (isolate Tick/South Africa/Pretoriuskop Pr4/1996) (ASFV) protein is ERCC4 domain-containing protein EP364R.